Consider the following 1816-residue polypeptide: Kinesin-like protein KIF1B (1816 aa).

Ser-2 is modified (N-acetylserine). One can recognise a Kinesin motor domain in the interval Ser-5–Ile-354. Residue Gly-97–Ser-104 coordinates ATP. Residues Asn-270–Arg-350 form an interaction with KIFBP region. 2 coiled-coil regions span residues Asn-365–Gln-386 and Gly-470–Arg-502. In terms of domain architecture, FHA spans Thr-556 to Val-612. Phosphothreonine occurs at positions 647 and 652. Coiled-coil stretches lie at residues Glu-668 to Val-737 and Ser-841 to Asp-869. Phosphoserine is present on residues Ser-1054, Ser-1057, Ser-1416, Ser-1454, and Ser-1487. Residues Val-1522 to Val-1571 are disordered. Positions Ser-1525–Thr-1553 are enriched in low complexity. Polar residues predominate over residues Phe-1554–Tyr-1566. Phosphoserine occurs at positions 1573, 1603, 1610, and 1613. Residues Ser-1620–Ser-1637 are compositionally biased toward low complexity. The segment at Ser-1620–Ser-1659 is disordered. Polar residues predominate over residues Asp-1640 to Ser-1659. Residues Val-1702 to Ala-1799 form the PH domain.

Belongs to the TRAFAC class myosin-kinesin ATPase superfamily. Kinesin family. Unc-104 subfamily. In terms of assembly, monomer. Interacts with KIFBP; positively regulates KIF1B microtubule motor activity. Interacts (via C-terminus end of the kinesin-motor domain) with CHP1; the interaction occurs in a calcium-dependent manner. As to quaternary structure, interacts with MADD (via death domain); links this isoform to Rab3-carrying vesicles in anterograde synaptic vesicle transport. In terms of tissue distribution, expressed in the brain (at protein level).

The protein localises to the cytoplasm. Its subcellular location is the cytoskeleton. It is found in the cytoplasmic vesicle. The protein resides in the secretory vesicle. It localises to the synaptic vesicle membrane. The protein localises to the mitochondrion. The enzyme catalyses ATP + H2O + a kinesin associated with a microtubule at position (n) = ADP + phosphate a kinesin associated with a microtubule at position (n+1, toward the plus end).. Has a plus-end-directed microtubule motor activity and functions as a motor for transport of vesicles and organelles along microtubules. Its function is as follows. Has a plus-end-directed microtubule motor activity and functions as a motor for anterograde synaptic vesicle transport along axonal microtubules from the cell body to the presynapse in neuronal cells. Functions as a downstream effector in a developmental apoptotic pathway that is activated when nerve growth factor (NGF) becomes limiting for neuronal progenitor cells. In terms of biological role, has a plus-end-directed microtubule motor activity and functions as a motor for anterograde transport of mitochondria. The chain is Kinesin-like protein KIF1B from Mus musculus (Mouse).